The sequence spans 165 residues: NAD(P)H-quinone oxidoreductase subunit I, chloroplastic (165 aa).

4Fe-4S ferredoxin-type domains follow at residues 55-84 and 95-124; these read GRIH…VDWE and KSYS…MTEE. [4Fe-4S] cluster-binding residues include Cys-64, Cys-67, Cys-70, Cys-74, Cys-104, Cys-107, Cys-110, and Cys-114.

It belongs to the complex I 23 kDa subunit family. As to quaternary structure, NDH is composed of at least 16 different subunits, 5 of which are encoded in the nucleus. The cofactor is [4Fe-4S] cluster.

It is found in the plastid. It localises to the chloroplast thylakoid membrane. It carries out the reaction a plastoquinone + NADH + (n+1) H(+)(in) = a plastoquinol + NAD(+) + n H(+)(out). It catalyses the reaction a plastoquinone + NADPH + (n+1) H(+)(in) = a plastoquinol + NADP(+) + n H(+)(out). Functionally, NDH shuttles electrons from NAD(P)H:plastoquinone, via FMN and iron-sulfur (Fe-S) centers, to quinones in the photosynthetic chain and possibly in a chloroplast respiratory chain. The immediate electron acceptor for the enzyme in this species is believed to be plastoquinone. Couples the redox reaction to proton translocation, and thus conserves the redox energy in a proton gradient. The sequence is that of NAD(P)H-quinone oxidoreductase subunit I, chloroplastic from Psilotum nudum (Whisk fern).